Reading from the N-terminus, the 563-residue chain is Septation ring formation regulator EzrA (563 aa).

The Extracellular segment spans residues 1-2 (ME). A helical transmembrane segment spans residues 3-21 (LVIGLLVILLALFAAGYFF). Topologically, residues 22-563 (RKKIYTEIDR…KKIKADQSAS (542 aa)) are cytoplasmic. Coiled-coil stretches lie at residues 133–159 (EEKS…AYSH), 243–276 (KGYK…ELDV), and 309–529 (SKMP…ERLF).

The protein belongs to the EzrA family.

It localises to the cell membrane. Negative regulator of FtsZ ring formation; modulates the frequency and position of FtsZ ring formation. Inhibits FtsZ ring formation at polar sites. Interacts either with FtsZ or with one of its binding partners to promote depolymerization. In Bacillus velezensis (strain DSM 23117 / BGSC 10A6 / LMG 26770 / FZB42) (Bacillus amyloliquefaciens subsp. plantarum), this protein is Septation ring formation regulator EzrA.